The primary structure comprises 819 residues: Protein kinase C-binding protein NELL2 (819 aa).

Positions 1 to 24 (MHAMESRVLLRTFCVILGLGAVWG) are cleaved as a signal peptide. Asparagine 56, asparagine 228, asparagine 296, and asparagine 301 each carry an N-linked (GlcNAc...) asparagine glycan. One can recognise a Laminin G-like domain in the interval 67 to 231 (PRSIKASTAT…AQCPDLNRTC (165 aa)). The region spanning 275–334 (RTCTVKGTTYRESESWTDGCKNCTCLNGTIQCETLVCPAPDCPPKSAPAYVDGKCCKECK) is the VWFC 1 domain. The EGF-like 1 domain maps to 400 to 442 (GYDFCSEKHTCMENSVCRNLNDRAVCSCRDGFRALREDNAYCE). Disulfide bonds link cysteine 404–cysteine 416, cysteine 410–cysteine 425, and cysteine 427–cysteine 441. The Ca(2+) site is built by aspartate 443, isoleucine 444, and glutamate 446. The 42-residue stretch at 443–484 (DIDECAEGRHYCRENTMCVNTPGSFMCICKTGYIRIDDYSCT) folds into the EGF-like 2; calcium-binding domain. Cystine bridges form between cysteine 447–cysteine 460, cysteine 454–cysteine 469, cysteine 471–cysteine 483, cysteine 489–cysteine 502, cysteine 496–cysteine 511, cysteine 513–cysteine 524, cysteine 528–cysteine 538, cysteine 532–cysteine 544, and cysteine 546–cysteine 555. 3 residues coordinate Ca(2+): asparagine 462, threonine 463, and serine 466. The EGF-like 3; calcium-binding domain maps to 485-525 (EHDECLTNQHNCDENALCFNTVGGHNCVCKPGYTGNGTTCK). N-linked (GlcNAc...) asparagine glycosylation is present at asparagine 520. The EGF-like 4 domain occupies 526 to 556 (AFCKDGCRNGGACIAANVCACPQGFTGPSCE). A glycan (O-linked (GlcNAc...) threonine) is linked at threonine 551. 3 residues coordinate Ca(2+): aspartate 558, isoleucine 559, and glutamate 561. One can recognise an EGF-like 5; calcium-binding domain in the interval 558–604 (DIDECSEGFVQCDSRANCINLPGWYHCECRDGYHDNGMFAPGGESCE). 3 disulfide bridges follow: cysteine 562–cysteine 575, cysteine 569–cysteine 584, and cysteine 586–cysteine 603. Ca(2+) is bound by residues asparagine 577, leucine 578, and tryptophan 581. The Ca(2+) site is built by aspartate 605, isoleucine 606, and glutamate 608. The EGF-like 6; calcium-binding domain occupies 605 to 640 (DIDECGTGRHSCTNDTICFNLDGGYDCRCPHGKNCT). Cystine bridges form between cysteine 609–cysteine 622, cysteine 616–cysteine 631, and cysteine 633–cysteine 639. N-linked (GlcNAc...) asparagine glycosylation is present at asparagine 618. Ca(2+) contacts are provided by asparagine 624, leucine 625, and glycine 628. An N-linked (GlcNAc...) asparagine glycan is attached at asparagine 638. One can recognise a VWFC 2 domain in the interval 701 to 759 (SQCLHQNGETVYNSGDTWVQDCRQCRCLQGEVDCWPLACPEVECEFSVLPENECCPRCV).

Homotrimer. Interacts with NICOL1; this interaction triggers epididymal differentiation. Interacts (via EGF domains) with ROBO3 (via FN domains); binding to ROBO3 induces repulsive guidance cue for commissural axons. In terms of tissue distribution, expressed in brain and testis but not in epididymis. Expressed in regions flanking the commissural axon trajectory, including the ventral horn.

It localises to the secreted. Functionally, plays multiple roles in neural tissues, regulates neuronal proliferation, survival, differentiation, polarization, as well as axon guidance and synaptic functions. Plays an important role in axon development during neuronal differentiation through the MAPK intracellular signaling pathway. Via binding to its receptor ROBO3, plays a role in axon guidance, functioning as a repulsive axon guidance cue that contributes to commissural axon guidance to the midline. Required for neuron survival through the modulation of MAPK signaling pathways too. Involved in the regulation of hypothalamic GNRH secretion and the control of puberty. Epididymal-secreted protein that signals through a ROS1-pathway to regulate the epididymal initial segment (IS) maturation, sperm maturation and male fertility. The sequence is that of Protein kinase C-binding protein NELL2 from Mus musculus (Mouse).